The following is a 393-amino-acid chain: 1-deoxy-D-xylulose 5-phosphate reductoisomerase (393 aa).

Thr10, Gly11, Ser12, Ile13, Arg37, Gln38, and Asn124 together coordinate NADPH. Lys125 lines the 1-deoxy-D-xylulose 5-phosphate pocket. Glu126 contacts NADPH. Mn(2+) is bound at residue Asp150. 4 residues coordinate 1-deoxy-D-xylulose 5-phosphate: Ser151, Glu152, Ser179, and His202. Glu152 is a Mn(2+) binding site. Gly208 serves as a coordination point for NADPH. 1-deoxy-D-xylulose 5-phosphate contacts are provided by Ser215, Asn220, Lys221, and Glu224. Glu224 is a binding site for Mn(2+).

The protein belongs to the DXR family. The cofactor is Mg(2+). Mn(2+) serves as cofactor.

It catalyses the reaction 2-C-methyl-D-erythritol 4-phosphate + NADP(+) = 1-deoxy-D-xylulose 5-phosphate + NADPH + H(+). It participates in isoprenoid biosynthesis; isopentenyl diphosphate biosynthesis via DXP pathway; isopentenyl diphosphate from 1-deoxy-D-xylulose 5-phosphate: step 1/6. Catalyzes the NADPH-dependent rearrangement and reduction of 1-deoxy-D-xylulose-5-phosphate (DXP) to 2-C-methyl-D-erythritol 4-phosphate (MEP). The chain is 1-deoxy-D-xylulose 5-phosphate reductoisomerase from Cupriavidus necator (strain ATCC 17699 / DSM 428 / KCTC 22496 / NCIMB 10442 / H16 / Stanier 337) (Ralstonia eutropha).